Here is a 765-residue protein sequence, read N- to C-terminus: Carboxysome assembly protein CsoS2 (765 aa).

Basic and acidic residues predominate over residues 1 to 22; that stretch reads MSTKTSREIALERRKAMSDGGK. Disordered stretches follow at residues 1-107 and 165-229; these read MSTK…RTDV and REAQ…NKNG. The segment at 1 to 215 is N-terminal domain; it reads MSTKTSREIA…RSKTGSTSKQ (215 aa). One copy of the N-repeat 1 repeat lies at 7 to 22; sequence REIALERRKAMSDGGK. Positions 38 to 63 are enriched in polar residues; that stretch reads SQDINSTGATSSNKKVLTSPSKSNIP. Residues 77-87 are compositionally biased toward basic and acidic residues; the sequence is SSKELGIERRK. N-repeat repeat units lie at residues 79-94, 158-173, and 196-211; these read KELG…THGK, RDIV…KHGK, and REIS…KTGS. The segment covering 187 to 207 has biased composition (basic and acidic residues); that stretch reads RRGDPDLSSREISQRVRELRS. The middle region stretch occupies residues 216–586; it reads GNGKCRPCGP…LSNCETPPND (371 aa). M-repeat repeat units lie at residues 240 to 289, 300 to 349, 358 to 397, 411 to 460, 470 to 519, and 530 to 580; these read KVGK…GQFC, RASV…KKYC, KVMQ…GDQY, KVGS…EKFC, KVGL…NDNC, and RATV…LSNC. Disordered stretches follow at residues 306–328 and 367–413; these read TTSG…GDEP and GLKV…EKVG. The C-terminal domain stretch occupies residues 589–734; that stretch reads YANQEKSASN…AMPPVDNKRN (146 aa). C-repeat repeat units lie at residues 604-648 and 677-711; these read SVNS…GTEQ and KKEP…EGVS. Disordered regions lie at residues 611-637 and 656-765; these read EKYS…GPFD and NMTY…GARG. Positions 730–741 are enriched in basic and acidic residues; sequence DNKRNDETEKPD. A C-terminal peptide region spans residues 735-765; the sequence is DETEKPDFLITGSSGNTRDGQLVTFSGGARG.

The protein belongs to the CsoS2 family. As to quaternary structure, probably interacts with the carboxysome major shell protein CsoS1 via the N-terminal domain. A CsoS1-CsoS1D-CsoS2 complex can be isolated following expression in E.coli. Interacts via its N-terminal repeats with RuBisCO. Unlike H.neapolitanus and predictions for P.marinus strain MIT 9313, this protein is not thought to have ribosomal frameshifting.

It is found in the carboxysome. Its function is as follows. Required for alpha-carboxysome (Cb) assembly, mediates interaction between RuBisCO and the Cb shell. The protein is probably highly flexible. The C-terminal repeats act as the encapsulation signal to target proteins to the Cb; they are necessary and sufficient to target both CsoS2 and foreign proteins to the Cb. The N-terminal repeats of this protein bind simultaneously to both subunits of RuBisCO. Probably also interacts with the major shell proteins (CsoS1); that interaction would increase the local concentration of CsoS2 so that it can condense RuBisCO and full carboxysomes can be formed. There are estimated to be 163 CsoS2 proteins per carboxysome; unlike H.neapolitanus only 1 form is seen. The polypeptide is Carboxysome assembly protein CsoS2 (Prochlorococcus marinus subsp. pastoris (strain CCMP1986 / NIES-2087 / MED4)).